A 1466-amino-acid polypeptide reads, in one-letter code: Collagen alpha-1(III) chain (1466 aa).

An N-terminal signal peptide occupies residues 1-23 (MMSFVQKGSWLLLALLHPTIILA). Positions 24-153 (QQEAVEGGCS…CPTGPQNYSP (130 aa)) are cleaved as a propeptide — N-terminal propeptide. The 60-residue stretch at 30-89 (GGCSHLGQSYADRDVWKPEPCQICVCDSGSVLCDDIICDDQELDCPNPEIPFGECCAVCP) folds into the VWFC domain. The segment at 95-1194 (PTRPPNGQGP…GPPGPPGAPG (1100 aa)) is disordered. Over residues 99 to 108 (PNGQGPQGPK) the composition is skewed to low complexity. Polar residues predominate over residues 146-155 (TGPQNYSPQY). Positions 149–167 (QNYSPQYDSYDVKSGVAVG) are nonhelical region (N-terminal). The segment at 168-1196 (GLAGYPGPAG…PGPPGAPGPC (1029 aa)) is triple-helical region. 4-hydroxyproline occurs at positions 173, 179, 182, 185, 191, 194, 197, 203, 206, 215, 218, 236, 239, 245, 248, 257, and 260. Residues 175-185 (PAGPPGPPGPP) are compositionally biased toward pro residues. A compositionally biased stretch (low complexity) spans 187–199 (TSGHPGSPGSPGY). The span at 229–241 (KDGESGRPGRPGE) shows a compositional bias: basic and acidic residues. Residues 251–260 (KGPAGIPGFP) show a composition bias toward low complexity. K263 carries the post-translational modification 5-hydroxylysine; alternate. K263 carries an O-linked (Gal...) hydroxylysine; alternate glycan. Basic and acidic residues predominate over residues 266–277 (RGFDGRNGEKGE). Residue P281 is modified to 4-hydroxyproline. A 5-hydroxylysine modification is found at K284. 4-hydroxyproline occurs at positions 290, 296, 305, 311, 314, 332, 335, 338, 344, 347, 359, 365, 371, 383, 386, 392, 404, 407, 416, 425, 434, 443, 455, 458, 470, 473, 479, 488, 500, 512, 524, 530, 533, 539, 542, 545, 551, 554, 563, 566, 575, 581, 590, 599, 602, 608, 620, 635, 644, 650, 656, 659, 661, 668, 671, 680, 686, 692, 701, 703, 713, 716, 722, 728, 737, 746, 749, 755, 770, 776, 785, 788, 797, 806, 812, 815, 821, 830, 839, 845, and 854. The span at 311–322 (PGLPGAAGARGN) shows a compositional bias: low complexity. The span at 355–380 (PAGSPGSNGAPGQRGEPGPQGHAGAQ) shows a compositional bias: low complexity. Gly residues predominate over residues 390 to 399 (GSPGGKGEMG). Residues 404–425 (PGAPGLMGARGPPGPAGANGAP) show a composition bias toward low complexity. Over residues 426-435 (GLRGGAGEPG) the composition is skewed to gly residues. Over residues 478–523 (LPGAAGERGAPGFRGPAGPNGIPGEKGPAGERGAPGPAGPRGAAGE) the composition is skewed to low complexity. Positions 528–549 (GVPGGPGMRGMPGSPGGPGSDG) are enriched in gly residues. The span at 642–651 (GLPGTGGPPG) shows a compositional bias: gly residues. Residues 669–678 (GAPGGKGDAG) show a composition bias toward gly residues. Low complexity predominate over residues 679–692 (APGERGPPGLAGAP). Positions 693-711 (GLRGGAGPPGPEGGKGAAG) are enriched in gly residues. The segment covering 729-738 (GERGGLGSPG) has biased composition (gly residues). Positions 787–796 (LPGIAGPRGS) are enriched in low complexity. Residues 823-835 (GKGERGAPGEKGE) are compositionally biased toward basic and acidic residues. The span at 836 to 850 (GGPPGVAGPPGGSGP) shows a compositional bias: gly residues. At K860 the chain carries 5-hydroxylysine. The span at 864 to 873 (GSPGGPGAAG) shows a compositional bias: gly residues. P866, P869, P875, P881, P884, P890, P892, P899, P905, P914, P917, P929, P935, P941, and P944 each carry 4-hydroxyproline. Over residues 890-907 (PGPPGPSGSPGKDGPPGP) the composition is skewed to pro residues. Positions 908 to 917 (AGNTGAPGSP) are enriched in low complexity. Over residues 946–961 (PLGIAGITGARGLAGP) the composition is skewed to low complexity. 4-hydroxyproline occurs at positions 962, 965, and 971. At K977 the chain carries 5-hydroxylysine. A 4-hydroxyproline mark is found at P983, P995, P1001, P1010, P1016, P1022, P1028, P1040, P1043, P1046, P1049, P1052, P1076, and P1085. Residues 1046 to 1055 (PGHPGPPGPV) show a composition bias toward pro residues. The span at 1067–1085 (SGPAGPAGAPGPAGSRGAP) shows a compositional bias: low complexity. The residue at position 1106 (K1106) is a 5-hydroxylysine. 4-hydroxyproline occurs at positions 1112, 1115, 1118, 1121, 1133, 1148, 1157, 1163, 1178, 1181, 1184, 1187, 1190, and 1193. Positions 1123-1133 (PAGQQGAIGSP) are enriched in low complexity. Positions 1181-1193 (PGQPGPPGPPGAP) are enriched in pro residues. The segment at 1197-1205 (CGGVGAAAI) is nonhelical region (C-terminal). Positions 1222–1466 (DEPMDFKINT…GVDVGPVCFL (245 aa)) are cleaved as a propeptide — C-terminal propeptide. The region spanning 1232–1466 (DEIMTSLKSV…GVDVGPVCFL (235 aa)) is the Fibrillar collagen NC1 domain. 3 disulfides stabilise this stretch: C1262-C1294, C1302-C1464, and C1372-C1417. Ca(2+)-binding residues include D1280, N1282, Q1283, C1285, and D1288.

The protein belongs to the fibrillar collagen family. As to quaternary structure, trimers of identical alpha 1(III) chains. The chains are linked to each other by interchain disulfide bonds. Trimers are also cross-linked via hydroxylysines. Interacts with ADGRG1. Proline residues at the third position of the tripeptide repeating unit (G-X-Y) are hydroxylated in some or all of the chains. Post-translationally, O-linked glycan consists of a Glc-Gal disaccharide bound to the oxygen atom of a post-translationally added hydroxyl group.

Its subcellular location is the secreted. The protein resides in the extracellular space. It localises to the extracellular matrix. In terms of biological role, collagen type III occurs in most soft connective tissues along with type I collagen. Involved in regulation of cortical development. Is the major ligand of ADGRG1 in the developing brain and binding to ADGRG1 inhibits neuronal migration and activates the RhoA pathway by coupling ADGRG1 to GNA13 and possibly GNA12. This is Collagen alpha-1(III) chain (COL3A1) from Homo sapiens (Human).